A 105-amino-acid chain; its full sequence is MRGAVQVFIMLLLATVSDCAVITGACERDVQCGAGTCCAISLWLRGLRLCTPLGREGEECHPGSHKIPFFRKRQHHTCPCSPSLLCSRFPDGRYRCSQDLKNVNF.

The signal sequence occupies residues 1-19 (MRGAVQVFIMLLLATVSDC). 5 cysteine pairs are disulfide-bonded: Cys-26–Cys-38, Cys-32–Cys-50, Cys-37–Cys-78, Cys-60–Cys-86, and Cys-80–Cys-96.

Belongs to the AVIT (prokineticin) family.

It is found in the secreted. Potently contracts gastrointestinal (GI) smooth muscle. Induces proliferation, migration and fenestration (the formation of membrane discontinuities) in capillary endothelial cells derived from endocrine glands. Has little or no effect on a variety of other endothelial and non-endothelial cell types. Induces proliferation and differentiation, but not migration, of enteric neural crest cells. Directly influences neuroblastoma progression by promoting the proliferation and migration of neuroblastoma cells. Positively regulates PTGS2 expression and prostaglandin synthesis. May play a role in placentation. May play a role in normal and pathological testis angiogenesis. This chain is Prokineticin-1 (Prok1), found in Rattus norvegicus (Rat).